The chain runs to 279 residues: Replication factor A protein 2 (279 aa).

Residues 26 to 47 (GAGFNEYDQSSQPSVDRQQGAG) are disordered. Residues 32–46 (YDQSSQPSVDRQQGA) show a composition bias toward polar residues. Residues 80-140 (VTFVGVLRNI…GNIKIFSGKI (61 aa)) constitute a DNA-binding region (OB).

This sequence belongs to the replication factor A protein 2 family. Heterotrimer of 68, 30, and 12 kDa chains. Phosphorylated in a cell cycle-dependent manner. Hypophosphorylated in G1, becomes phosphorylated at the G1/S boundary, it is maintained in this state through the M phase.

The protein resides in the nucleus. In terms of biological role, binds to single-stranded sequences. In Schizosaccharomyces pombe (strain 972 / ATCC 24843) (Fission yeast), this protein is Replication factor A protein 2 (ssb2).